The primary structure comprises 201 residues: Probable nicotinate-nucleotide adenylyltransferase (201 aa).

It belongs to the NadD family.

The enzyme catalyses nicotinate beta-D-ribonucleotide + ATP + H(+) = deamido-NAD(+) + diphosphate. Its pathway is cofactor biosynthesis; NAD(+) biosynthesis; deamido-NAD(+) from nicotinate D-ribonucleotide: step 1/1. Catalyzes the reversible adenylation of nicotinate mononucleotide (NaMN) to nicotinic acid adenine dinucleotide (NaAD). This Clostridium botulinum (strain Loch Maree / Type A3) protein is Probable nicotinate-nucleotide adenylyltransferase.